A 402-amino-acid polypeptide reads, in one-letter code: Zinc finger protein CONSTANS-LIKE 14 (402 aa).

Residues C12, C15, C35, H40, C55, C58, C78, and H83 each contribute to the Zn(2+) site. The segment at C12–I54 adopts a B box-type 1; atypical zinc-finger fold. The B box-type 2; atypical zinc finger occupies C55 to V97. The tract at residues S287–D322 is disordered. The segment covering H295 to I310 has biased composition (polar residues). Residues V345–R372 adopt a coiled-coil conformation. The region spanning R357–A399 is the CCT domain.

It belongs to the CONSTANS family.

The protein localises to the nucleus. The polypeptide is Zinc finger protein CONSTANS-LIKE 14 (COL14) (Arabidopsis thaliana (Mouse-ear cress)).